The sequence spans 644 residues: Protein ETHYLENE-INSENSITIVE 3-like 1b (644 aa).

Disordered regions lie at residues 47–75 (QCVM…DDDV) and 97–131 (ELQL…KMSR). The span at 66–75 (AGEDDSDDDV) shows a compositional bias: acidic residues.

It belongs to the EIN3 family. In terms of tissue distribution, highly expressed in roots. Expressed at low levels in leaves and panicles.

It is found in the nucleus. In terms of biological role, transcription factor acting as a positive regulator in the ethylene response pathway. Involved in wound signaling by binding specifically to the DNA sequence 5'-ATGTACCT-3' found in the promoter of some wound-inducible genes. Binds directly to the DNA sequence 5'-TGTTACAAATACC-3' in the promoter of the GA20OX2 gene to activate its expression at the transcriptional level during ethylene signaling. This Oryza sativa subsp. japonica (Rice) protein is Protein ETHYLENE-INSENSITIVE 3-like 1b.